The chain runs to 145 residues: Large ribosomal subunit protein eL32 (145 aa).

It belongs to the eukaryotic ribosomal protein eL32 family.

The sequence is that of Large ribosomal subunit protein eL32 (rpl32e) from Aeropyrum pernix (strain ATCC 700893 / DSM 11879 / JCM 9820 / NBRC 100138 / K1).